The chain runs to 377 residues: Nitric oxide reductase FlRd-NAD(+) reductase (377 aa).

Belongs to the FAD-dependent oxidoreductase family. FAD is required as a cofactor.

Its subcellular location is the cytoplasm. The catalysed reaction is 2 reduced [nitric oxide reductase rubredoxin domain] + NAD(+) + H(+) = 2 oxidized [nitric oxide reductase rubredoxin domain] + NADH. The protein operates within nitrogen metabolism; nitric oxide reduction. In terms of biological role, one of at least two accessory proteins for anaerobic nitric oxide (NO) reductase. Reduces the rubredoxin moiety of NO reductase. This chain is Nitric oxide reductase FlRd-NAD(+) reductase, found in Escherichia coli O6:K15:H31 (strain 536 / UPEC).